The sequence spans 513 residues: 2-isopropylmalate synthase (513 aa).

One can recognise a Pyruvate carboxyltransferase domain in the interval 5 to 268; the sequence is LIIFDTTLRD…EVGIDTTQIV (264 aa). D14, H202, H204, and N239 together coordinate Mn(2+). Residues 394–513 form a regulatory domain region; the sequence is RLLSLEQQSA…SKNERVAAQG (120 aa).

Belongs to the alpha-IPM synthase/homocitrate synthase family. LeuA type 1 subfamily. As to quaternary structure, homodimer. It depends on Mn(2+) as a cofactor.

It is found in the cytoplasm. It carries out the reaction 3-methyl-2-oxobutanoate + acetyl-CoA + H2O = (2S)-2-isopropylmalate + CoA + H(+). It participates in amino-acid biosynthesis; L-leucine biosynthesis; L-leucine from 3-methyl-2-oxobutanoate: step 1/4. In terms of biological role, catalyzes the condensation of the acetyl group of acetyl-CoA with 3-methyl-2-oxobutanoate (2-ketoisovalerate) to form 3-carboxy-3-hydroxy-4-methylpentanoate (2-isopropylmalate). This Methylibium petroleiphilum (strain ATCC BAA-1232 / LMG 22953 / PM1) protein is 2-isopropylmalate synthase.